The following is a 902-amino-acid chain: Cytosolic 10-formyltetrahydrofolate dehydrogenase (902 aa).

Residues 1 to 310 (MKIAVIGQSL…PASQFFKGSA (310 aa)) are hydrolase domain. Ser9 bears the Phosphoserine mark. At Lys38 the chain carries N6-succinyllysine. 88-90 (QFI) serves as a coordination point for (6R)-10-formyltetrahydrofolate. The active-site Proton donor is His106. Position 142 (Asp142) interacts with (6R)-10-formyltetrahydrofolate. The region spanning 318–395 (EEELATAEAV…DFIQLLVRKL (78 aa)) is the Carrier domain. Position 354 is an O-(pantetheine 4'-phosphoryl)serine (Ser354). Positions 417–902 (TLQMPYQLFI…LRIKTVTFEY (486 aa)) are aldehyde dehydrogenase domain. NADP(+) contacts are provided by residues 571–573 (IPW) and 597–600 (KPAQ). A phosphoserine mark is found at Ser629 and Ser631. NADP(+)-binding positions include 630–635 (GSLVGQ) and 650–651 (GS). An N6-succinyllysine modification is found at Lys660. The active-site Proton acceptor is Glu673. 673-674 (EL) is a binding site for NADP(+). Catalysis depends on Cys707, which acts as the Proton donor. Lys757 provides a ligand contact to NADP(+). An N6-succinyllysine modification is found at Lys767. 804-806 (ESF) is a binding site for NADP(+). At Ser825 the chain carries Phosphoserine. Lys882 carries the post-translational modification N6-acetyllysine.

The protein in the N-terminal section; belongs to the GART family. This sequence in the C-terminal section; belongs to the aldehyde dehydrogenase family. ALDH1L subfamily. Homotetramer. Post-translationally, phosphopantetheinylation at Ser-354 by AASDHPPT is required for the formyltetrahydrofolate dehydrogenase activity. Highly expressed in liver (at protein level). Also expressed in pancreas, brain and lung (at protein level).

It is found in the cytoplasm. The protein localises to the cytosol. It catalyses the reaction (6R)-10-formyltetrahydrofolate + NADP(+) + H2O = (6S)-5,6,7,8-tetrahydrofolate + CO2 + NADPH + H(+). Its function is as follows. Cytosolic 10-formyltetrahydrofolate dehydrogenase that catalyzes the NADP(+)-dependent conversion of 10-formyltetrahydrofolate to tetrahydrofolate and carbon dioxide. May also have an NADP(+)-dependent aldehyde dehydrogenase activity towards formaldehyde, acetaldehyde, propionaldehyde, and benzaldehyde. This chain is Cytosolic 10-formyltetrahydrofolate dehydrogenase, found in Mus musculus (Mouse).